A 407-amino-acid chain; its full sequence is Na(+)-translocating NADH-quinone reductase subunit F (407 aa).

A helical transmembrane segment spans residues 3–23 (IILGVAMFTGIVMVLVLLILF). Residues 32 to 126 (GDIAVEVNGD…NLKIELPEEI (95 aa)) enclose the 2Fe-2S ferredoxin-type domain. Positions 69, 75, 78, and 110 each coordinate [2Fe-2S] cluster. One can recognise an FAD-binding FR-type domain in the interval 129-269 (VKKWECEVIS…SGPFGEFFAK (141 aa)).

The protein belongs to the NqrF family. As to quaternary structure, composed of six subunits; NqrA, NqrB, NqrC, NqrD, NqrE and NqrF. [2Fe-2S] cluster serves as cofactor. FAD is required as a cofactor.

The protein resides in the cell inner membrane. The catalysed reaction is a ubiquinone + n Na(+)(in) + NADH + H(+) = a ubiquinol + n Na(+)(out) + NAD(+). Functionally, NQR complex catalyzes the reduction of ubiquinone-1 to ubiquinol by two successive reactions, coupled with the transport of Na(+) ions from the cytoplasm to the periplasm. The first step is catalyzed by NqrF, which accepts electrons from NADH and reduces ubiquinone-1 to ubisemiquinone by a one-electron transfer pathway. This Serratia proteamaculans (strain 568) protein is Na(+)-translocating NADH-quinone reductase subunit F.